The chain runs to 120 residues: Large ribosomal subunit protein uL18 (120 aa).

The protein belongs to the universal ribosomal protein uL18 family. As to quaternary structure, part of the 50S ribosomal subunit; part of the 5S rRNA/L5/L18/L25 subcomplex. Contacts the 5S and 23S rRNAs.

Its function is as follows. This is one of the proteins that bind and probably mediate the attachment of the 5S RNA into the large ribosomal subunit, where it forms part of the central protuberance. This is Large ribosomal subunit protein uL18 from Chloroflexus aggregans (strain MD-66 / DSM 9485).